A 101-amino-acid chain; its full sequence is Small ribosomal subunit protein uS14 (101 aa).

Belongs to the universal ribosomal protein uS14 family. As to quaternary structure, part of the 30S ribosomal subunit. Contacts proteins S3 and S10.

Its function is as follows. Binds 16S rRNA, required for the assembly of 30S particles and may also be responsible for determining the conformation of the 16S rRNA at the A site. In Wigglesworthia glossinidia brevipalpis, this protein is Small ribosomal subunit protein uS14.